The chain runs to 269 residues: Ethylene-responsive transcription factor ERN1 (269 aa).

Residues 1–15 show a composition bias toward polar residues; that stretch reads MEIQFQQPNLQQHQK. Disordered regions lie at residues 1 to 36 and 128 to 157; these read MEIQ…NKFV and DVPA…LSSG. The segment at residues 34–91 is a DNA-binding region (AP2/ERF); sequence KFVGVRQRPSGRWVAEIKDTTQKIRMWLGTFETAEEAARAYDEAACLLRGSNTRTNFI. Residues 128-146 are compositionally biased toward low complexity; sequence DVPAPSASTTSTSSNTSNS.

Belongs to the AP2/ERF transcription factor family. ERF subfamily.

Its subcellular location is the nucleus. Functionally, transcription factor involved in the symbiotic nodule signaling pathway in response to rhizobial stimulation. Functions as a transcriptional regulator required for root infection by symbiotic rhizobia, infection thread (IT) formation, and nodule development. May coordinate these processes. Functions downstream of the CCAMK-CYCLOPS complex. Probably not involved in arbuscular mycorrhizal (AM) symbiosis. The protein is Ethylene-responsive transcription factor ERN1 of Lotus japonicus (Lotus corniculatus var. japonicus).